We begin with the raw amino-acid sequence, 259 residues long: Probable ABC transporter permease protein RC0129 (259 aa).

The next 5 membrane-spanning stretches (helical) occupy residues 13–35 (TVKF…SSII), 49–69 (LFIG…SGAV), 148–168 (VITA…IGVM), 195–215 (PIDV…ISII), and 237–257 (AVVN…ELFF).

This sequence belongs to the MlaE permease family.

The protein localises to the cell inner membrane. Functionally, could be part of an ABC transporter complex. In Rickettsia conorii (strain ATCC VR-613 / Malish 7), this protein is Probable ABC transporter permease protein RC0129.